The following is a 53-amino-acid chain: UPF0391 membrane protein BP1737 (53 aa).

Helical transmembrane passes span 5-25 (AVVFFVIAIIAAVLGFGGIAA) and 30-50 (IAKILFFVFLVLALLSILGGV).

This sequence belongs to the UPF0391 family.

It is found in the cell membrane. This is UPF0391 membrane protein BP1737 from Bordetella pertussis (strain Tohama I / ATCC BAA-589 / NCTC 13251).